A 223-amino-acid polypeptide reads, in one-letter code: Cuticular glutathione peroxidase (223 aa).

The first 19 residues, 1-19, serve as a signal peptide directing secretion; it reads MSAQLLILSHMVLLQLIVA. Asn39 is a glycosylation site (N-linked (GlcNAc...) asparagine). Residue Cys74 is part of the active site. Asn92 carries N-linked (GlcNAc...) asparagine glycosylation.

Belongs to the glutathione peroxidase family. As to quaternary structure, homotetramer.

It localises to the secreted. The catalysed reaction is 2 glutathione + H2O2 = glutathione disulfide + 2 H2O. Functionally, could inhibit the oxidative burst of leukocytes and neutralize the secondary products of lipid peroxidation, thus providing the resistance of these parasites to immune effector mechanisms and their persistence in the mammalian host. It may also be involved in the formation of cross-linking residues such as dityrosine, trityrosine and isotrityrosine identified in cuticular collagen. Highly cross-linked external cortex may also serve to protect the parasite from immune attack. The sequence is that of Cuticular glutathione peroxidase from Brugia malayi (Filarial nematode worm).